Consider the following 122-residue polypeptide: Large ribosomal subunit protein uL14 (122 aa).

It belongs to the universal ribosomal protein uL14 family. Part of the 50S ribosomal subunit. Forms a cluster with proteins L3 and L19. In the 70S ribosome, L14 and L19 interact and together make contacts with the 16S rRNA in bridges B5 and B8.

Its function is as follows. Binds to 23S rRNA. Forms part of two intersubunit bridges in the 70S ribosome. The protein is Large ribosomal subunit protein uL14 of Lactobacillus delbrueckii subsp. bulgaricus (strain ATCC BAA-365 / Lb-18).